The sequence spans 879 residues: Pentatricopeptide repeat-containing protein At1g71210, mitochondrial (879 aa).

A mitochondrion-targeting transit peptide spans 1 to 44 (MLRCWSVTVERSCEGMLLRRRILSLSASSFRNFTSGNNGDAIPF). PPR repeat units lie at residues 181–215 (SLRL…GLDL), 216–246 (DSFG…ISVR), 250–280 (CAVT…LLPN), 285–319 (CGSG…GTVN), 320–355 (MDRA…GCEL), 356–390 (EVFR…GVSP), 391–425 (NKKT…GFAP), 426–460 (TAMS…GHFL), 461–495 (GGKT…DLLP), 496–530 (KRIA…GVDT), 531–565 (SFKM…GYTP), 566–597 (TRSL…FQLS), 602–636 (KVQA…GITP), 637–667 (TVAS…LREQ), 671–705 (KKRL…GLQP), and 706–740 (SIEC…GRRI).

The protein belongs to the PPR family. P subfamily.

The protein localises to the mitochondrion. The protein is Pentatricopeptide repeat-containing protein At1g71210, mitochondrial of Arabidopsis thaliana (Mouse-ear cress).